Here is a 95-residue protein sequence, read N- to C-terminus: MTKVGGLGATHQADKTVEDIVNAVKPSIQSKLGTNISNLKVISYKTQLVNGTNYFVKVRTENGYAHLRIYKPFSGAASLVSVQDGKAKDDEITYF.

The Secondary area of contact motif lies at 47–51 (QLVNG).

The protein belongs to the cystatin family.

It is found in the cytoplasm. Its function is as follows. Intracellular thiol proteinase inhibitor. Inhibits cathepsin B, but not papain. This is Cystatin-A2 (cpiB) from Dictyostelium discoideum (Social amoeba).